We begin with the raw amino-acid sequence, 102 residues long: P antigen family member 4 (102 aa).

Basic residues predominate over residues Met1–Arg10. Residues Met1–Pro102 form a disordered region. Phosphoserine; by CLK2 is present on Ser7. At Ser9 the chain carries Phosphoserine; by HIPK1 and CLK2. Positions Gly45 to Thr85 are enriched in basic and acidic residues. Thr51 carries the phosphothreonine; by HIPK1 and CLK2 modification. Phosphothreonine; by CLK2 is present on Thr71. 2 positions are modified to phosphoserine; by CLK2: Ser73 and Ser79. Phosphothreonine; by CLK2 is present on residues Thr85 and Thr94.

Belongs to the GAGE family. As to quaternary structure, interacts with JUN. Post-translationally, HIPK1-mediated phosphorylation at Thr-51 leads to the compaction of its intrinsically disordered conformation and is critical for its ability to potentiate the transcriptional activator activity of JUN inspite of a reduced interaction with JUN. CLK2-mediated phosphorylation at multiple Ser and Thr residues attenuates its ability to potentiate JUN transcriptional activator activity. In terms of tissue distribution, expressed at basal lvels in the adult normal prostate gland but is highly up-regulated in the fetal prostate and prostate cancer cells. Preferentially expressed in normal male and female reproductive tissues, testis, fallopian tube, uterus, and placenta, as well as in testicular cancer, uterine cancer, cervical cancer and kidney cancer.

The protein localises to the cytoplasm. Its subcellular location is the nucleus. It is found in the mitochondrion. Intrinsically disordered protein that potentiates the transcriptional activator activity of JUN. Protects cells from stress-induced apoptosis by inhibiting reactive oxygen species (ROS) production and via regulation of the MAPK signaling pathway. This chain is P antigen family member 4 (PAGE4), found in Homo sapiens (Human).